We begin with the raw amino-acid sequence, 48 residues long: Osteocalcin (48 aa).

The 46-residue stretch at 1–46 folds into the Gla domain; it reads SFAVGSSYGAAPDPLEAQREVCELNPDCDELADHIGFQEAYRRFYG. Ca(2+)-binding residues include Glu-16, Glu-20, Glu-23, and Asp-29. A 4-carboxyglutamate mark is found at Glu-16, Glu-20, and Glu-23. Cys-22 and Cys-28 are oxidised to a cystine.

This sequence belongs to the osteocalcin/matrix Gla protein family. Gamma-carboxyglutamate residues are formed by vitamin K dependent carboxylation by GGCX. These residues are essential for the binding of calcium.

Its subcellular location is the secreted. The carboxylated form is one of the main organic components of the bone matrix, which constitutes 1-2% of the total bone protein. The carboxylated form binds strongly to apatite and calcium. In Dromaius novaehollandiae (Emu), this protein is Osteocalcin (BGLAP).